A 79-amino-acid chain; its full sequence is Large ribosomal subunit protein uL29 (79 aa).

This sequence belongs to the universal ribosomal protein uL29 family.

The protein is Large ribosomal subunit protein uL29 of Tropheryma whipplei (strain TW08/27) (Whipple's bacillus).